We begin with the raw amino-acid sequence, 150 residues long: MKKLLSLVIIVVGIIADQVFKNWVVANIQLGDTKKIWPDVLSLTYIKNDGAAWSSFSGQQWFFLVLTPIVLIVALWFLWKKMGQNWYFAGLTLIIAGALGNFMDRVRQGFVVDMFQTEFMNFPIFNIADILLSVGFVVLFIAILTDKETK.

3 helical membrane passes run 5-25 (LSLVIIVVGIIADQVFKNWVV), 59-79 (QQWFFLVLTPIVLIVALWFLW), and 82-102 (MGQNWYFAGLTLIIAGALGNF). Residues Asp113 and Asp129 contribute to the active site. Residues 124–144 (IFNIADILLSVGFVVLFIAIL) traverse the membrane as a helical segment.

This sequence belongs to the peptidase A8 family.

Its subcellular location is the cell membrane. It catalyses the reaction Release of signal peptides from bacterial membrane prolipoproteins. Hydrolyzes -Xaa-Yaa-Zaa-|-(S,diacylglyceryl)Cys-, in which Xaa is hydrophobic (preferably Leu), and Yaa (Ala or Ser) and Zaa (Gly or Ala) have small, neutral side chains.. The protein operates within protein modification; lipoprotein biosynthesis (signal peptide cleavage). This protein specifically catalyzes the removal of signal peptides from prolipoproteins. The sequence is that of Lipoprotein signal peptidase from Lactococcus lactis subsp. cremoris (strain SK11).